A 229-amino-acid polypeptide reads, in one-letter code: Ras-like protein rasV (229 aa).

Residue G40–T47 coordinates GTP. The short motif at Y62–Y70 is the Effector region element. GTP-binding positions include D87–Q91 and N146–D149. C226 is modified (cysteine methyl ester). Residue C226 is the site of S-geranylgeranyl cysteine attachment. A propeptide spans K227–M229 (removed in mature form).

Belongs to the small GTPase superfamily. Ras family.

Its subcellular location is the cell membrane. It catalyses the reaction GTP + H2O = GDP + phosphate + H(+). In terms of biological role, ras proteins bind GDP/GTP and possess intrinsic GTPase activity. In Dictyostelium discoideum (Social amoeba), this protein is Ras-like protein rasV (rasV).